The sequence spans 796 residues: Striatin-3 (796 aa).

Met-1 carries the N-acetylmethionine modification. A compositionally biased stretch (gly residues) spans 1-13 (MDELAGGGGGGQG). The disordered stretch occupies residues 1-60 (MDELAGGGGGGQGMAAPPRPQQGPGGNLSLPPGANGAPGGGGPPAAEAAGPPAGPELSRP). Residues 71 to 79 (YIQHEWARF) are caveolin-binding. Residues 77 to 136 (ARFEMERAHWEVERAELQARIAFLQGERKGQENLKKDLVRRIKMLEYALKQERAKYHKLK) adopt a coiled-coil conformation. At Thr-150 the chain carries Phosphothreonine. The tract at residues 166–183 (QNSQLTWKQGRQLLRQYL) is calmodulin-binding. Ser-202, Ser-214, Ser-229, Ser-257, and Ser-334 each carry phosphoserine. 2 disordered regions span residues 252 to 271 (ENAD…IPEG) and 311 to 335 (EDGE…DLSP). Acidic residues predominate over residues 253-264 (NADDSDEEENDM). WD repeat units lie at residues 477–516 (SHFD…PAKK), 530–569 (AHIG…VDPY), 583–622 (AHTD…PCVC), 678–717 (QSSN…MIHS), 720–759 (AHLD…CVQE), and 766–795 (KLDE…AKVF).

This sequence belongs to the WD repeat striatin family. As to quaternary structure, tetramerizes. Part of the core of STRIPAK complexes composed of PP2A catalytic and scaffolding subunits, the striatins (PP2A regulatory subunits), the striatin-associated proteins MOB4, STRIP1 and STRIP2, PDCD10 and members of the STE20 kinases, such as STK24 and STK26. The STRIPAK complex can be extended by adapter proteins such as SLMAP:SIKE1 or CTTNBP2NL. Interacts with CDC42BPB. Mainly expressed in the brain and muscles but is also detected at low levels in various tissues such as kidney, spleen and lung.

The protein resides in the cytoplasm. Its subcellular location is the membrane. Its function is as follows. Calmodulin-binding scaffolding protein which is the center of the striatin-interacting phosphatase and kinase (STRIPAK) complexes. STRIPAK complexes have critical roles in protein (de)phosphorylation and are regulators of multiple signaling pathways including Hippo, MAPK, nuclear receptor and cytoskeleton remodeling. Different types of STRIPAK complexes are involved in a variety of biological processes such as cell growth, differentiation, apoptosis, metabolism and immune regulation. The chain is Striatin-3 (Strn3) from Mus musculus (Mouse).